A 443-amino-acid polypeptide reads, in one-letter code: ASTRA-associated protein 1 (443 aa).

WD repeat units lie at residues 23 to 67 (YHKR…PITH), 71 to 110 (EGNS…QLSI), 258 to 295 (HYPN…QLET), and 318 to 359 (KVHL…VEQT). A disordered region spans residues 372 to 391 (SSMGDLTNGSGSNTESSSKS). Over residues 378-391 (TNGSGSNTESSSKS) the composition is skewed to low complexity.

It belongs to the WD repeat ASA1 family. In terms of assembly, component of the ASTRA chromatin remodeling machinery complex composed of at least RVB1, RVB2, TRA1, TEL2, TTI1 and TTI2.

The protein resides in the nucleus. Its function is as follows. Component of the ASTRA complex involved in chromatin remodeling. The chain is ASTRA-associated protein 1 (ASA1) from Saccharomyces cerevisiae (strain RM11-1a) (Baker's yeast).